Reading from the N-terminus, the 234-residue chain is Peptidase E (234 aa).

Residues S120, D135, and H157 each act as charge relay system in the active site.

This sequence belongs to the peptidase S51 family.

The protein resides in the cytoplasm. The catalysed reaction is Dipeptidase E catalyzes the hydrolysis of dipeptides Asp-|-Xaa. It does not act on peptides with N-terminal Glu, Asn or Gln, nor does it cleave isoaspartyl peptides.. Functionally, hydrolyzes dipeptides containing N-terminal aspartate residues. May play a role in allowing the cell to use peptide aspartate to spare carbon otherwise required for the synthesis of the aspartate family of amino acids. The sequence is that of Peptidase E from Salmonella gallinarum (strain 287/91 / NCTC 13346).